A 295-amino-acid polypeptide reads, in one-letter code: Protein shisa-2 homolog (295 aa).

Positions 1–33 (MWGARRSSVSSSWNAASLLQLLLAALLAAGARA) are cleaved as a signal peptide. Topologically, residues 34–110 (SGEYCHGWLD…RADKDGPDGS (77 aa)) are extracellular. The disordered stretch occupies residues 87 to 108 (GCDNDRQQGAGEPGRADKDGPD). The chain crosses the membrane as a helical span at residues 111–131 (AVPIYVPFLIVGSVFVAFIIL). Residues 132-295 (GSLVAACCCR…EQKMYPAVTV (164 aa)) are Cytoplasmic-facing. Residues 168–205 (PSASTSRGSSSRQSSTAASSSSSANSGARAPPTRSQTN) form a disordered region. Over residues 169–197 (SASTSRGSSSRQSSTAASSSSSANSGARA) the composition is skewed to low complexity.

This sequence belongs to the shisa family.

It is found in the endoplasmic reticulum membrane. Plays an essential role in the maturation of presomitic mesoderm cells by individual attenuation of both FGF and WNT signaling. In Homo sapiens (Human), this protein is Protein shisa-2 homolog (SHISA2).